We begin with the raw amino-acid sequence, 274 residues long: Ribose-5-phosphate isomerase (274 aa).

The protein belongs to the ribose 5-phosphate isomerase family.

Its subcellular location is the cytoplasm. The enzyme catalyses aldehydo-D-ribose 5-phosphate = D-ribulose 5-phosphate. The protein operates within carbohydrate degradation; pentose phosphate pathway; D-ribose 5-phosphate from D-ribulose 5-phosphate (non-oxidative stage): step 1/1. This chain is Ribose-5-phosphate isomerase (RKI1), found in Kluyveromyces lactis (strain ATCC 8585 / CBS 2359 / DSM 70799 / NBRC 1267 / NRRL Y-1140 / WM37) (Yeast).